A 213-amino-acid polypeptide reads, in one-letter code: Adenylate kinase (213 aa).

Residue 10-15 (GSGKGT) participates in ATP binding. The interval 30 to 59 (SVGDLLRNIISSESKLGKGIKDTVESGNLI) is NMP. Residues Arg36, 57–59 (NLI), 83–86 (GFPR), and Gln90 contribute to the AMP site. Residues 125-160 (DRLTCLDCKSIYSISSFKNTTCAKCKSTRLEKRIDD) form an LID region. Arg126 contributes to the ATP binding site. Cys129 and Cys132 together coordinate Zn(2+). Residue 135 to 136 (IY) coordinates ATP. Zn(2+)-binding residues include Cys146 and Cys149. The AMP site is built by Arg157 and Arg169. Residue Leu195 coordinates ATP.

The protein belongs to the adenylate kinase family. As to quaternary structure, monomer.

It localises to the cytoplasm. The catalysed reaction is AMP + ATP = 2 ADP. Its pathway is purine metabolism; AMP biosynthesis via salvage pathway; AMP from ADP: step 1/1. In terms of biological role, catalyzes the reversible transfer of the terminal phosphate group between ATP and AMP. Plays an important role in cellular energy homeostasis and in adenine nucleotide metabolism. This is Adenylate kinase from Wolbachia pipientis subsp. Culex pipiens (strain wPip).